The chain runs to 400 residues: Enoyl-[acyl-carrier-protein] reductase [NADH] (400 aa).

NAD(+) contacts are provided by residues 48–53 (GASTGY), 74–75 (FE), 111–112 (DA), and 139–140 (LA). Residue tyrosine 225 participates in substrate binding. The active-site Proton donor is tyrosine 235. NAD(+) is bound by residues lysine 244 and 273 to 275 (VVT).

This sequence belongs to the TER reductase family. As to quaternary structure, monomer.

It carries out the reaction a 2,3-saturated acyl-[ACP] + NAD(+) = a (2E)-enoyl-[ACP] + NADH + H(+). The protein operates within lipid metabolism; fatty acid biosynthesis. Functionally, involved in the final reduction of the elongation cycle of fatty acid synthesis (FAS II). Catalyzes the reduction of a carbon-carbon double bond in an enoyl moiety that is covalently linked to an acyl carrier protein (ACP). The protein is Enoyl-[acyl-carrier-protein] reductase [NADH] of Burkholderia cenocepacia (strain ATCC BAA-245 / DSM 16553 / LMG 16656 / NCTC 13227 / J2315 / CF5610) (Burkholderia cepacia (strain J2315)).